We begin with the raw amino-acid sequence, 693 residues long: Homeobox protein caupolican (693 aa).

6 disordered regions span residues 20 to 104 (TANT…PSRG), 288 to 331 (NKMT…PGNQ), 387 to 453 (AQSH…DCGI), 480 to 538 (YLGQ…PLSM), 561 to 627 (MHLP…SMHS), and 648 to 693 (YGHG…RSGS). The span at 41–59 (ASLSPSGGSTATGLTAGPL) shows a compositional bias: low complexity. Positions 226–288 (LAARRKNATR…NARRRLKKEN (63 aa)) form a DNA-binding region, homeobox; TALE-type. Basic and acidic residues-rich tracts occupy residues 288-298 (NKMTWEPKNKT) and 308-317 (DDEKEKDAGD). 2 stretches are compositionally biased toward low complexity: residues 397–419 (HPQQMQHHQQQQQQQQNQQQLQH) and 493–515 (QQLPHQPLQQHQQQQLQQLQQQQ). Basic residues predominate over residues 516-527 (QHHHHPHHHHPH). Residues 609 to 627 (SSGGSSSSSGSSHSSSMHS) show a composition bias toward low complexity. Positions 651-675 (GHSHGHGHGHGHGLGHGHGLGHGHG) are enriched in basic residues.

This sequence belongs to the TALE/IRO homeobox family.

It localises to the nucleus. In terms of biological role, controls proneural and vein forming genes. Positive transcriptional controller of ac-sc (achaete-scute). May act as an activator that interacts with the transcriptional complex assembled on the ac and sc promoters and participates in transcription initiation. This Drosophila melanogaster (Fruit fly) protein is Homeobox protein caupolican (caup).